Consider the following 402-residue polypeptide: UDP-glucose 6-dehydrogenase (402 aa).

NAD(+) is bound by residues 2-19 (KIAVAGSGYVGLSLGVLL), V11, D29, K34, T83, T118, and E145. Residues 141 to 145 (EFLRE), K204, N208, 249 to 253 (YNNPS), and G257 contribute to the substrate site. Y259 contributes to the NAD(+) binding site. C260 (nucleophile) is an active-site residue. K263 is an NAD(+) binding site. K320 is a substrate binding site. R327 contacts NAD(+).

The protein belongs to the UDP-glucose/GDP-mannose dehydrogenase family.

The enzyme catalyses UDP-alpha-D-glucose + 2 NAD(+) + H2O = UDP-alpha-D-glucuronate + 2 NADH + 3 H(+). Its pathway is nucleotide-sugar biosynthesis; UDP-alpha-D-glucuronate biosynthesis; UDP-alpha-D-glucuronate from UDP-alpha-D-glucose: step 1/1. Functionally, catalyzes the formation of UDP-glucuronic acid which is required for capsular hyaluronic acid synthesis. This is UDP-glucose 6-dehydrogenase (hasB) from Streptococcus pyogenes serotype M1.